A 375-amino-acid polypeptide reads, in one-letter code: MAWTGPIKGTFSGMVPRCLRRTPEQTRDVIDSERLLYHRFRALFREGASQSPLETCCRNHKRSSARADQTNIRVKKTMVAKTRNPRAIHPLNEKVYSVRKIFKQLPSNKPSRIVPVRENGCRWRKVVYHRAHFEELPMSFKLSPRAYPRFNCLVRKHGYGKTIRMVSCYASGISEAKNSLARTIREKFARSAYLSGKRQVPPPLKREDFGTWNDYREELKKNQTKWYLCRVHYRQAYDRLYDQEFRYWKGHCSFETTRPRVRCGDWQSPLDSLVALQSPPMDLVCNAPTLLPTAIPVPDHPSYRKYKLSDLSWTKQHERAVREDQKRLKRAVGEKDKIKDKYGVQHERLYRQNFMKNFRRIAEMGRSSAPRGPFL.

The sequence is that of Non-structural protein NS5 (NS-5) from Rottboellia (Sorghum).